A 1507-amino-acid polypeptide reads, in one-letter code: Nonribosomal peptide synthetase ataP (1507 aa).

The 72-residue stretch at 1–72 (MQINIRNEIA…DIISRSTGMY (72 aa)) folds into the Carrier 1 domain. Residue Ser33 is modified to O-(pantetheine 4'-phosphoryl)serine. The interval 98–119 (TPSPSPSGPSTGCPTPDTLDTT) is disordered. Residues 105–115 (GPSTGCPTPDT) are compositionally biased toward low complexity. Residues 163-429 (TRMAWQQVLE…NRVFRQLVQL (267 aa)) form a condensation 1 region. An adenylation region spans residues 514 to 893 (AAAENPEACA…GRNDRQIKLR (380 aa)). The Carrier 2 domain occupies 988–1065 (NEMSPTEQRV…DLSQRIDKLQ (78 aa)). Ser1025 carries the post-translational modification O-(pantetheine 4'-phosphoryl)serine. Positions 1099–1471 (TSNTSFTVSF…MTALRLLIKN (373 aa)) are condensation 2.

It belongs to the NRP synthetase family.

It functions in the pathway mycotoxin biosynthesis. In terms of biological role, nonribosomal peptide synthetase; part of the gene cluster that mediates the biosynthesis of acetylaranotin, a member of the epipolythiodioxopiperazine (ETP) class of toxins characterized by a disulfide-bridged cyclic dipeptide. The first step of acetylaranotin biosynthesis is performed by the NRPS ataP which produces diketopiperazine cyclo-L-Phe-L-Phe via the condensation of 2 phenylalanines (L-Phe). The ataC domain of ataTC then catalyzes the formation of bishydroxylation of cyclo-L-Phe-L-Phe. The glutathione S-transferase domain ataG in ataIMG further catalyzes the conjugation of two glutathiones to the bishydroxylated intermediate. Next, the dipeptidase ataJ removes the Glu residues. The following step is performed by the carbon sulfur lyase domain ataI of ataIMG which may convert the bis-cysteinyl adduct to yield an epidithiol intermediate. The ataT domain from ataTC then catalyzes the oxidation of the free dithiols, followed by a cyclization step catalyzed by the cytochrome P450 ataF. AtaF probably acts as an epoxidase to promote a dual epoxidation formation at C8 and C9 along with C8' and C9', followed by the spontaneous nucleophilic attack of the amide nitrogens N10 and N10' to yield an intermediate with the pyrrolidine partial structure. The final steps of acetylaranotin biosynthesis involve the acetylation and ring rearrangement of an epitetrathiodiketopiperazine intermediate to produce acetylaranotin. AtaH probably catalyzes the acetylation of epitetrathiodiketopiperazine to produce a diacetate and ataY is responsible for the formation of the dihydrooxepin moiety that converts the diacetate intermediate to acetylaranotin via acetylapoaranotin. Both enzymes could function independently in the absence of the other. The acetylaranotin bis-thiomethyltransferase ataS located outside of acetylaranotin gene cluster is the main thiomethyltransferase responsible for converting acetylaranotin and its related intermediates to their methylated forms. The sequence is that of Nonribosomal peptide synthetase ataP from Aspergillus terreus (strain NIH 2624 / FGSC A1156).